The primary structure comprises 104 residues: MAWIILVIAGLLEVIWAIGLKYSHGFSRLTPSIITLVAMAASVFLLAYAMKSLPAGTAYAVWTGIGAVGTAILGIVLLGESASLARILSLGLILAGIIGLKLAS.

Met1 is a topological domain (cytoplasmic). The chain crosses the membrane as a helical span at residues 2–19 (AWIILVIAGLLEVIWAIG). The Periplasmic portion of the chain corresponds to 20 to 28 (LKYSHGFSR). A helical transmembrane segment spans residues 29–48 (LTPSIITLVAMAASVFLLAY). The Cytoplasmic portion of the chain corresponds to 49 to 54 (AMKSLP). Residues 55–77 (AGTAYAVWTGIGAVGTAILGIVL) traverse the membrane as a helical segment. Residues 78–81 (LGES) are Periplasmic-facing. Residues 82–100 (ASLARILSLGLILAGIIGL) traverse the membrane as a helical segment. The Cytoplasmic portion of the chain corresponds to 101–104 (KLAS).

Belongs to the drug/metabolite transporter (DMT) superfamily. Small multidrug resistance (SMR) (TC 2.A.7.1) family. Gdx/SugE subfamily.

It localises to the cell inner membrane. Functionally, guanidinium ion exporter. Couples guanidinium export to the proton motive force, exchanging one guanidinium ion for two protons. The chain is Guanidinium exporter from Yersinia pestis.